Consider the following 349-residue polypeptide: MDIPQKYKLYTKKKIIFGIILLITLFLSSIYALCVGDYKLTVNQVVNALMGYGKDDINLVIWNIRLPRIFAAIISGMSLAVAGAVMQCILRNPLASPFTMGISHGAMFGACFAIIMFGFGGAESTGRIFINNPYMITIFAFLGALIGVVVILLLAKLRGLTPEAMILAGVAMSSLFTAGTMLIQYFADDLQLAAMVYWTFGDLGRAIWTEIYIMAAVMIPSLIYFMYKRWDYNALEAGEETAKSLGVNTERTRLIGMLVASLLTSVNVAFLGIIGFVGLICPHIVRICIGGDYRFLIPISALFGAVLLLIADTFARTIIAPIVLPVGILTSFLGAPMFLYLLLKMYKRV.

A run of 9 helical transmembrane segments spans residues 15-35 (IIFG…ALCV), 69-89 (IFAA…MQCI), 100-120 (MGIS…FGFG), 135-155 (MITI…LLLA), 166-186 (ILAG…IQYF), 206-226 (AIWT…IYFM), 254-274 (LIGM…LGII), 295-315 (FLIP…DTFA), and 318-338 (IIAP…APMF).

The protein belongs to the binding-protein-dependent transport system permease family. FecCD subfamily.

The protein localises to the cell membrane. Its function is as follows. Probably part of a binding-protein-dependent transport system. Probably responsible for the translocation of the substrate across the membrane. This chain is Putative ABC transporter permease protein MJ0087, found in Methanocaldococcus jannaschii (strain ATCC 43067 / DSM 2661 / JAL-1 / JCM 10045 / NBRC 100440) (Methanococcus jannaschii).